The sequence spans 233 residues: Forkhead box protein L3 (233 aa).

A DNA-binding region (fork-head) is located at residues 32–130 (RPAYSYIALI…ENGNYRRRRR (99 aa)). A compositionally biased stretch (basic residues) spans 125–134 (YRRRRRRRGP). The tract at residues 125–198 (YRRRRRRRGP…PRDLKFSIDY (74 aa)) is disordered. Residues 175–184 (REPPASPAPP) are compositionally biased toward pro residues. Residues 185-194 (GKEHPRDLKF) show a composition bias toward basic and acidic residues.

It localises to the nucleus. Its function is as follows. Probable transcriptional regulator. This Homo sapiens (Human) protein is Forkhead box protein L3.